The chain runs to 132 residues: ATP synthase epsilon chain 1 (132 aa).

This sequence belongs to the ATPase epsilon chain family. F-type ATPases have 2 components, CF(1) - the catalytic core - and CF(0) - the membrane proton channel. CF(1) has five subunits: alpha(3), beta(3), gamma(1), delta(1), epsilon(1). CF(0) has three main subunits: a, b and c.

Its subcellular location is the cell inner membrane. Its function is as follows. Produces ATP from ADP in the presence of a proton gradient across the membrane. The chain is ATP synthase epsilon chain 1 from Cereibacter sphaeroides (strain ATCC 17023 / DSM 158 / JCM 6121 / CCUG 31486 / LMG 2827 / NBRC 12203 / NCIMB 8253 / ATH 2.4.1.) (Rhodobacter sphaeroides).